The following is a 283-amino-acid chain: MTDSNNWYIEHFERTGSAIGYRITGKLDEVQSPFQKIEIFRTTDWGNLMTIDGAIMLTSKDNFFYHEMISHPVLFTHAAPKRVVIIGGGDCGTLREVLKHKGVESVTQCDIDEQVTVMARKHFPELCDSNDDARAELLFDDGVAYMANCPAGSVDVVIVDSTDPVGPGEGLFNKAFYASCFKALKDDGILVQQSESPLMQLELINEMRTEMGKAGFGSFKTLPFPQPCYPTGWWSVTLARKGESSFDFRQADSAAKTFETLYYTAALHTGVLVTPPFVQAALK.

The 237-residue stretch at 5–241 folds into the PABS domain; sequence NNWYIEHFER…GWWSVTLARK (237 aa). Q35 is a binding site for S-methyl-5'-thioadenosine. Residues H66 and D90 each coordinate spermidine. Residues D110 and 141–142 each bind S-methyl-5'-thioadenosine; that span reads DG. The Proton acceptor role is filled by D160. 160–163 lines the spermidine pocket; that stretch reads DSTD. P167 lines the S-methyl-5'-thioadenosine pocket.

It belongs to the spermidine/spermine synthase family. In terms of assembly, homodimer or homotetramer.

It is found in the cytoplasm. It catalyses the reaction S-adenosyl 3-(methylsulfanyl)propylamine + putrescine = S-methyl-5'-thioadenosine + spermidine + H(+). The protein operates within amine and polyamine biosynthesis; spermidine biosynthesis; spermidine from putrescine: step 1/1. In terms of biological role, catalyzes the irreversible transfer of a propylamine group from the amino donor S-adenosylmethioninamine (decarboxy-AdoMet) to putrescine (1,4-diaminobutane) to yield spermidine. The sequence is that of Polyamine aminopropyltransferase from Stenotrophomonas maltophilia (strain R551-3).